Consider the following 81-residue polypeptide: Photosystem I iron-sulfur center (81 aa).

4Fe-4S ferredoxin-type domains lie at methionine 1 to tryptophan 31 and isoleucine 39 to tyrosine 68. [4Fe-4S] cluster is bound by residues cysteine 11, cysteine 14, cysteine 17, cysteine 21, cysteine 48, cysteine 51, cysteine 54, and cysteine 58.

In terms of assembly, the cyanobacterial PSI reaction center is composed of one copy each of PsaA,B,C,D,E,F,I,J,K,L,M and X, and forms trimeric complexes. It depends on [4Fe-4S] cluster as a cofactor.

Its subcellular location is the cellular thylakoid membrane. It catalyses the reaction reduced [plastocyanin] + hnu + oxidized [2Fe-2S]-[ferredoxin] = oxidized [plastocyanin] + reduced [2Fe-2S]-[ferredoxin]. Functionally, apoprotein for the two 4Fe-4S centers FA and FB of photosystem I (PSI); essential for photochemical activity. FB is the terminal electron acceptor of PSI, donating electrons to ferredoxin. The C-terminus interacts with PsaA/B/D and helps assemble the protein into the PSI complex. Required for binding of PsaD and PsaE to PSI. PSI is a plastocyanin/cytochrome c6-ferredoxin oxidoreductase, converting photonic excitation into a charge separation, which transfers an electron from the donor P700 chlorophyll pair to the spectroscopically characterized acceptors A0, A1, FX, FA and FB in turn. The sequence is that of Photosystem I iron-sulfur center from Microcystis aeruginosa (strain NIES-843 / IAM M-2473).